Consider the following 217-residue polypeptide: Adenylate kinase (217 aa).

10–15 (GAGKGT) is an ATP binding site. The segment at 30-59 (STGDMFREAIKRGTPLGRQAEVYIKGGRLV) is NMP. Residues Thr-31, Arg-36, 57–59 (RLV), 85–88 (GFPR), and Gln-92 contribute to the AMP site. Residues 126–163 (GRRVCRQCGATYHVRYNPPAVPGKCDACGQDLVQRADD) form an LID region. Arg-127 is a binding site for ATP. Positions 130 and 133 each coordinate Zn(2+). 136–137 (TY) lines the ATP pocket. Positions 150 and 153 each coordinate Zn(2+). Residues Arg-160 and Arg-171 each coordinate AMP. Gln-199 is an ATP binding site.

Belongs to the adenylate kinase family. Monomer.

Its subcellular location is the cytoplasm. The enzyme catalyses AMP + ATP = 2 ADP. The protein operates within purine metabolism; AMP biosynthesis via salvage pathway; AMP from ADP: step 1/1. In terms of biological role, catalyzes the reversible transfer of the terminal phosphate group between ATP and AMP. Plays an important role in cellular energy homeostasis and in adenine nucleotide metabolism. The protein is Adenylate kinase of Moorella thermoacetica (strain ATCC 39073 / JCM 9320).